A 436-amino-acid chain; its full sequence is 3-ketoacyl-CoA thiolase (436 aa).

Cys-99 serves as the catalytic Acyl-thioester intermediate. Active-site proton acceptor residues include His-392 and Cys-422.

The protein belongs to the thiolase-like superfamily. Thiolase family. As to quaternary structure, heterotetramer of two alpha chains (FadJ) and two beta chains (FadI).

Its subcellular location is the cytoplasm. The catalysed reaction is an acyl-CoA + acetyl-CoA = a 3-oxoacyl-CoA + CoA. Its pathway is lipid metabolism; fatty acid beta-oxidation. Its function is as follows. Catalyzes the final step of fatty acid oxidation in which acetyl-CoA is released and the CoA ester of a fatty acid two carbons shorter is formed. The sequence is that of 3-ketoacyl-CoA thiolase from Shewanella sp. (strain ANA-3).